The primary structure comprises 511 residues: Sphingosine-1-phosphate transporter MFSD2B (511 aa).

Transmembrane regions (helical) follow at residues 108–128 (MPWM…LWFV), 136–156 (VLWY…YHVP), 236–256 (IAAG…FLGV), 280–300 (TMQF…SAAV), 323–343 (NLVL…QWFL), 357–377 (LMIP…AYVV), 379–399 (VASG…LPDV), 415–435 (AIFY…ALGI), and 462–482 (LLIG…LAFY).

It belongs to the major facilitator superfamily.

The protein resides in the cell membrane. It carries out the reaction sphing-4-enine 1-phosphate(in) = sphing-4-enine 1-phosphate(out). It catalyses the reaction sphinganine 1-phosphate(in) = sphinganine 1-phosphate(out). The enzyme catalyses sphinga-4E,14Z-dienine-1-phosphate(in) = sphinga-4E,14Z-dienine-1-phosphate(out). In terms of biological role, lipid transporter that specifically mediates export of sphingosine-1-phosphate in red blood cells and platelets. Sphingosine-1-phosphate is a signaling sphingolipid and its export from red blood cells into in the plasma is required for red blood cell morphology. Sphingosine-1-phosphate export from platelets is required for platelet aggregation and thrombus formation. In addition to export, also able to mediate S1P import. In Xenopus tropicalis (Western clawed frog), this protein is Sphingosine-1-phosphate transporter MFSD2B.